Here is a 352-residue protein sequence, read N- to C-terminus: Macrophage-capping protein (352 aa).

The residue at position 1 (M1) is an N-acetylmethionine. A Gelsolin-like 1 repeat occupies E27–G75. Positions R139 to K148 match the Nuclear localization signal motif. Gelsolin-like repeat units lie at residues I150–N190 and M265–Q311. At S341 the chain carries Phosphoserine.

This sequence belongs to the villin/gelsolin family. In terms of assembly, interacts with NUP62. Interacts with NUTF2 and RAN; involved in CAPG nuclear import. Post-translationally, phosphorylated. Nuclear GCAP39 is more highly phosphorylated than cytoplasmic GCAP39. In terms of tissue distribution, present in a large variety of tissues and is particularly abundant in kidney and lung. Highly expressed in macrophages (at protein level).

Its subcellular location is the nucleus. The protein resides in the cytoplasm. It is found in the melanosome. It localises to the cell projection. The protein localises to the lamellipodium. Its subcellular location is the ruffle. In terms of biological role, calcium-sensitive protein which reversibly blocks the barbed ends of actin filaments but does not sever preformed actin filaments. May play an important role in macrophage function. May play a role in regulating cytoplasmic and/or nuclear structures through potential interactions with actin. May bind DNA. Uncapping occurs either when Ca(2+) falls or when the concentration of polyphosphoinositide rises, both at low and high Ca(2+). The polypeptide is Macrophage-capping protein (Capg) (Mus musculus (Mouse)).